We begin with the raw amino-acid sequence, 156 residues long: Putative HTH-type transcriptional regulator YffB (156 aa).

One can recognise an HTH rrf2-type domain in the interval lysine 2–aspartate 137.

The protein is Putative HTH-type transcriptional regulator YffB (yffB) of Lactococcus lactis subsp. lactis (strain IL1403) (Streptococcus lactis).